A 121-amino-acid chain; its full sequence is NADH-quinone oxidoreductase subunit A (121 aa).

The next 3 membrane-spanning stretches (helical) occupy residues 8 to 28 (YLPI…TIIG), 65 to 85 (LVAI…PWAI), and 93 to 113 (QGMI…FYII).

It belongs to the complex I subunit 3 family. As to quaternary structure, NDH-1 is composed of 14 different subunits. Subunits NuoA, H, J, K, L, M, N constitute the membrane sector of the complex.

Its subcellular location is the cell inner membrane. It carries out the reaction a quinone + NADH + 5 H(+)(in) = a quinol + NAD(+) + 4 H(+)(out). Functionally, NDH-1 shuttles electrons from NADH, via FMN and iron-sulfur (Fe-S) centers, to quinones in the respiratory chain. The immediate electron acceptor for the enzyme in this species is believed to be a menaquinone. Couples the redox reaction to proton translocation (for every two electrons transferred, four hydrogen ions are translocated across the cytoplasmic membrane), and thus conserves the redox energy in a proton gradient. The protein is NADH-quinone oxidoreductase subunit A of Flavobacterium psychrophilum (strain ATCC 49511 / DSM 21280 / CIP 103535 / JIP02/86).